The sequence spans 669 residues: MAAAQEADGARSAVVAAGGGSSGQVTSNGSIGRDPPAETQPQNPPAQPAPNAWQVIKGVLFRIFIIWAISSWFRRGPAPQDQAGPGGAPRVASRNLFPKDTLMNLHVYISEHEHFTDFNATSALFWEQHDLVYGDWTSGENSDGCYEHFAELDIPQSVQQNGSIYIHVYFTKSGFHPDPRQKALYRRLATVHMSRMINKYKRRRFQKTKNLLTGETEADPEMIKRAEDYGPVEVISHWHPNITINIVDDHTPWVKGSVPPPLDQYVKFDAVSGDYYPIIYFNDYWNLQKDYYPINESLASLPLRVSFCPLSLWRWQLYAAQSTKSPWNFLGDELYEQSDEEQDSVKVALLETNPYLLALTIIVSIVHSVFEFLAFKNDIQFWNSRQSLEGLSVRSVFFGVFQSFVVLLYILDNETNFVVQVSVFIGVLIDLWKITKVMDVRLDREHRVAGIFPRLSFKDKSTYIESSTKVYDDMAFRYLSWILFPLLGCYAVYSLLYLEHKGWYSWVLSMLYGFLLTFGFITMTPQLFINYKLKSVAHLPWRMLTYKALNTFIDDLFAFVIKMPVMYRIGCLRDDVVFFIYLYQRWIYRVDPTRVNEFGMSGEDPTAAAPVAEVPTAAGALTPTPAPTTTTATREEASTSLPTKPTQGASSASEPQEAPPKPAEDKKKD.

Positions 1–50 (MAAAQEADGARSAVVAAGGGSSGQVTSNGSIGRDPPAETQPQNPPAQPAP) are disordered. Ala-2 is subject to N-acetylalanine. Over 2-354 (AAAQEADGAR…VKVALLETNP (353 aa)) the chain is Extracellular. Residues Asn-28, Asn-119, Asn-161, Asn-241, and Asn-295 are each glycosylated (N-linked (GlcNAc...) asparagine). A helical membrane pass occupies residues 355–375 (YLLALTIIVSIVHSVFEFLAF). Residues 376–390 (KNDIQFWNSRQSLEG) are Cytoplasmic-facing. Residues 391–411 (LSVRSVFFGVFQSFVVLLYIL) form a helical membrane-spanning segment. Residues 412–416 (DNETN) are Extracellular-facing. N-linked (GlcNAc...) asparagine glycosylation occurs at Asn-413. Residues 417–437 (FVVQVSVFIGVLIDLWKITKV) traverse the membrane as a helical segment. At 438-477 (MDVRLDREHRVAGIFPRLSFKDKSTYIESSTKVYDDMAFR) the chain is on the cytoplasmic side. A helical membrane pass occupies residues 478–498 (YLSWILFPLLGCYAVYSLLYL). The Extracellular segment spans residues 499 to 502 (EHKG). A helical transmembrane segment spans residues 503–523 (WYSWVLSMLYGFLLTFGFITM). The Cytoplasmic portion of the chain corresponds to 524–669 (TPQLFINYKL…PKPAEDKKKD (146 aa)). Ser-601 carries the post-translational modification Phosphoserine. Low complexity predominate over residues 614-632 (VPTAAGALTPTPAPTTTTA). Positions 614 to 669 (VPTAAGALTPTPAPTTTTATREEASTSLPTKPTQGASSASEPQEAPPKPAEDKKKD) are disordered. Polar residues predominate over residues 638 to 648 (STSLPTKPTQG).

It belongs to the CLPTM1 family. Widely expressed.

Its subcellular location is the membrane. Its function is as follows. Involved in GABAergic but not glutamatergic transmission. Binds and traps GABAA receptors in the endoplasmic reticulum (ER). Modulates postsynaptic GABAergic transmission, and therefore inhibitory neurotransmission, by reducing the plasma membrane expression of these receptors. Altered GABAergic signaling is one among many causes of cleft palate. Might function as a lipid scramblase, translocating lipids in membranes from one leaflet to the other one. Required for efficient glycosylphosphatidylinositol (GPI) inositol deacylation in the ER, which is a crucial step to switch GPI-anchored proteins (GPI-APs) from protein folding to transport states. May play a role in T-cell development. This Homo sapiens (Human) protein is Putative lipid scramblase CLPTM1 (CLPTM1).